We begin with the raw amino-acid sequence, 476 residues long: Abscisic acid 8'-hydroxylase CYP707A1 (476 aa).

Residues 5-25 form a helical membrane-spanning segment; it reads FEIFLYISMFVLGYLSYYFCF. Heme is bound at residue Cys-422.

It belongs to the cytochrome P450 family. Requires heme as cofactor. Expressed in ovaries (specifically in ovules and placenta), sepals, petals and pedicels.

The protein resides in the membrane. The catalysed reaction is 2-cis-(+)-abscisate + reduced [NADPH--hemoprotein reductase] + O2 = (+)-8'-hydroxyabscisate + oxidized [NADPH--hemoprotein reductase] + H2O + H(+). The protein operates within plant hormone degradation; abscisic acid degradation. Its function is as follows. Involved in the oxidative degradation of abscisic acid, especially in pollinated ovaries. This chain is Abscisic acid 8'-hydroxylase CYP707A1, found in Solanum lycopersicum (Tomato).